The primary structure comprises 535 residues: Putative subtilisin-like proteinase 2 (535 aa).

The first 17 residues, 1–17 (MFFVGVAVLAALQSVWG), serve as a signal peptide directing secretion. Residues 221 to 475 (NWIFRVLQIK…IPRLGCKGRI (255 aa)) form the Peptidase S8 domain. Catalysis depends on charge relay system residues Asp-255 and His-277. A disulfide bridge links Cys-369 with Cys-400. Ser-420 functions as the Charge relay system in the catalytic mechanism. Residues 489-509 (IVPLVFVVLITSALLYLLLIG) traverse the membrane as a helical segment.

Belongs to the peptidase S8 family.

It is found in the membrane. Its function is as follows. May be involved in the degradation of proteins for nutrient acquisition or possess a regulatory function by proteolytic activation of proproteins. The sequence is that of Putative subtilisin-like proteinase 2 (SPL2) from Encephalitozoon cuniculi (strain GB-M1) (Microsporidian parasite).